Consider the following 607-residue polypeptide: (R)-limonene synthase 1, chloroplastic (607 aa).

The N-terminal 52 residues, 1 to 52, are a transit peptide targeting the chloroplast; that stretch reads MSSCINPSTLATSVNGFKCLPLATNRAAIRIMAKNKPVQCLVSTKYDNLTVD. Residues Asp-343 and Asp-347 each coordinate Mn(2+). Residues Asp-343, Asp-347, Arg-485, Asp-488, and Lys-504 each coordinate substrate. Residues 343 to 347 carry the DDXXD motif motif; that stretch reads DDIYD. Asp-488 provides a ligand contact to Mn(2+).

It belongs to the terpene synthase family. The cofactor is Mg(2+). Requires Mn(2+) as cofactor.

It localises to the plastid. The protein resides in the chloroplast. The enzyme catalyses (2E)-geranyl diphosphate = (4R)-limonene + diphosphate. Inhibited by 2-fluorogeranyl diphosphate (FGPP) and 2-fluoroneryl diphosphate (FNPP). In terms of biological role, catalyzes the conversion of geranyl diphosphate to (+)-(4R)-limonene. Produces exclusively the (+)-enantiomer. Can use neryl diphosphate as substrate. Has no activity with farnesyl diphosphate. This chain is (R)-limonene synthase 1, chloroplastic, found in Citrus sinensis (Sweet orange).